A 292-amino-acid chain; its full sequence is F-box/LRR-repeat protein 15 (292 aa).

One can recognise an F-box domain in the interval 12–59 (LLDLPWEDVLVPHILSYLPLRHILSLQRVSKPFHSLVHIYLCNCRHFD). LRR repeat units follow at residues 134-155 (HLQN…RSLA), 160-181 (CLEA…SYLV), 186-207 (RLKS…EETA), 212-233 (DLEH…RTLA), and 238-259 (NLKS…GNLR).

It belongs to the FBXL15 family. In terms of assembly, part of the SCF (SKP1-CUL1-F-box) E3 ubiquitin-protein ligase complex SCF(FBXL15).

It is found in the cytoplasm. It functions in the pathway protein modification; protein ubiquitination. Functionally, substrate recognition component of a SCF (SKP1-CUL1-F-box protein) E3 ubiquitin-protein ligase complex which mediates the ubiquitination and subsequent proteasomal degradation of target proteins. Acts as a positive regulator of the BMP signaling pathway. Required for dorsal/ventral pattern formation. In Xenopus laevis (African clawed frog), this protein is F-box/LRR-repeat protein 15 (fbxl15).